The primary structure comprises 249 residues: Ribosomal RNA small subunit methyltransferase G (249 aa).

S-adenosyl-L-methionine-binding positions include glycine 88, phenylalanine 93, 111–113 (DAT), 139–140 (AE), and arginine 158.

It belongs to the methyltransferase superfamily. RNA methyltransferase RsmG family.

The protein localises to the cytoplasm. Functionally, specifically methylates the N7 position of a guanine in 16S rRNA. The sequence is that of Ribosomal RNA small subunit methyltransferase G from Thermus thermophilus (strain ATCC BAA-163 / DSM 7039 / HB27).